The sequence spans 658 residues: A-type ATP synthase subunit I (658 aa).

7 helical membrane passes run 383-403 (MAFV…YGII), 427-447 (IIMM…NGFI), 475-495 (ILIM…ILGA), 507-526 (ALGS…LYLV), 530-552 (IFGA…LFGL), 568-588 (LLAL…LTGL), and 591-611 (EMIP…GHIA).

Belongs to the V-ATPase 116 kDa subunit family. As to quaternary structure, has multiple subunits with at least A(3), B(3), C, D, E, F, H, I and proteolipid K(x).

It localises to the cell membrane. Component of the A-type ATP synthase that produces ATP from ADP in the presence of a proton gradient across the membrane. This Methanothermobacter thermautotrophicus (strain ATCC 29096 / DSM 1053 / JCM 10044 / NBRC 100330 / Delta H) (Methanobacterium thermoautotrophicum) protein is A-type ATP synthase subunit I.